Reading from the N-terminus, the 122-residue chain is Large ribosomal subunit protein uL14 (122 aa).

The protein belongs to the universal ribosomal protein uL14 family. As to quaternary structure, part of the 50S ribosomal subunit. Forms a cluster with proteins L3 and L19. In the 70S ribosome, L14 and L19 interact and together make contacts with the 16S rRNA in bridges B5 and B8.

In terms of biological role, binds to 23S rRNA. Forms part of two intersubunit bridges in the 70S ribosome. The polypeptide is Large ribosomal subunit protein uL14 (Shewanella sp. (strain ANA-3)).